The following is a 320-amino-acid chain: ATP-dependent 6-phosphofructokinase (320 aa).

G12 is an ATP binding site. ADP contacts are provided by residues 22–26 (RGVVR) and 55–60 (RYSVSD). Residues 73–74 (RF) and 103–106 (GDGS) each bind ATP. D104 contributes to the Mg(2+) binding site. 126 to 128 (TID) is a substrate binding site. D128 acts as the Proton acceptor in catalysis. R155 is an ADP binding site. Substrate is bound by residues R163 and 170–172 (MGR). ADP contacts are provided by residues 186–188 (GCE), K212, and 214–216 (KKH). Substrate contacts are provided by residues E223, R244, and 250–253 (HIQR).

The protein belongs to the phosphofructokinase type A (PFKA) family. ATP-dependent PFK group I subfamily. Prokaryotic clade 'B1' sub-subfamily. In terms of assembly, homotetramer. Requires Mg(2+) as cofactor.

Its subcellular location is the cytoplasm. It catalyses the reaction beta-D-fructose 6-phosphate + ATP = beta-D-fructose 1,6-bisphosphate + ADP + H(+). It functions in the pathway carbohydrate degradation; glycolysis; D-glyceraldehyde 3-phosphate and glycerone phosphate from D-glucose: step 3/4. With respect to regulation, allosterically activated by ADP and other diphosphonucleosides, and allosterically inhibited by phosphoenolpyruvate. Functionally, catalyzes the phosphorylation of D-fructose 6-phosphate to fructose 1,6-bisphosphate by ATP, the first committing step of glycolysis. This chain is ATP-dependent 6-phosphofructokinase, found in Serratia proteamaculans (strain 568).